Here is a 441-residue protein sequence, read N- to C-terminus: UPF0761 membrane protein RSc1559 (441 aa).

Helical transmembrane passes span 44-64 (VLSLVPILTVAFALFTAFPMF), 101-121 (GLTAAGLVGLVVTSVMTMLTV), 141-161 (VLVFWALVSFGPVLIGASLSV), 182-202 (VVVGLVPILLSAIAFAMLYVF), 207-227 (LVAWRDAFLAGLVAAVAFEIA), and 248-268 (FAALPIFLLWIYVSWLVTLLG).

Belongs to the UPF0761 family.

Its subcellular location is the cell inner membrane. The polypeptide is UPF0761 membrane protein RSc1559 (Ralstonia nicotianae (strain ATCC BAA-1114 / GMI1000) (Ralstonia solanacearum)).